Reading from the N-terminus, the 476-residue chain is Aspartyl/glutamyl-tRNA(Asn/Gln) amidotransferase subunit B (476 aa).

The protein belongs to the GatB/GatE family. GatB subfamily. In terms of assembly, heterotrimer of A, B and C subunits.

It carries out the reaction L-glutamyl-tRNA(Gln) + L-glutamine + ATP + H2O = L-glutaminyl-tRNA(Gln) + L-glutamate + ADP + phosphate + H(+). The catalysed reaction is L-aspartyl-tRNA(Asn) + L-glutamine + ATP + H2O = L-asparaginyl-tRNA(Asn) + L-glutamate + ADP + phosphate + 2 H(+). Allows the formation of correctly charged Asn-tRNA(Asn) or Gln-tRNA(Gln) through the transamidation of misacylated Asp-tRNA(Asn) or Glu-tRNA(Gln) in organisms which lack either or both of asparaginyl-tRNA or glutaminyl-tRNA synthetases. The reaction takes place in the presence of glutamine and ATP through an activated phospho-Asp-tRNA(Asn) or phospho-Glu-tRNA(Gln). The protein is Aspartyl/glutamyl-tRNA(Asn/Gln) amidotransferase subunit B of Clostridium botulinum (strain Eklund 17B / Type B).